We begin with the raw amino-acid sequence, 469 residues long: 3-isopropylmalate dehydratase large subunit (469 aa).

Residues Cys350, Cys410, and Cys413 each coordinate [4Fe-4S] cluster.

The protein belongs to the aconitase/IPM isomerase family. LeuC type 1 subfamily. As to quaternary structure, heterodimer of LeuC and LeuD. Requires [4Fe-4S] cluster as cofactor.

The enzyme catalyses (2R,3S)-3-isopropylmalate = (2S)-2-isopropylmalate. It functions in the pathway amino-acid biosynthesis; L-leucine biosynthesis; L-leucine from 3-methyl-2-oxobutanoate: step 2/4. Catalyzes the isomerization between 2-isopropylmalate and 3-isopropylmalate, via the formation of 2-isopropylmaleate. This Mesorhizobium japonicum (strain LMG 29417 / CECT 9101 / MAFF 303099) (Mesorhizobium loti (strain MAFF 303099)) protein is 3-isopropylmalate dehydratase large subunit.